A 354-amino-acid polypeptide reads, in one-letter code: Rhodopsin (354 aa).

Residues 1-36 (MNGTEGPNFYVPFSNKSGVVRSPFEYPQYYLAEPWQ) lie on the Extracellular side of the membrane. Residues N2 and N15 are each glycosylated (N-linked (GlcNAc...) asparagine). A helical membrane pass occupies residues 37–61 (YSVLAAYMFLLILLGFPVNFLTLYV). The Cytoplasmic portion of the chain corresponds to 62–73 (TIQHKKLRTPLN). Residues 74–96 (YILLNLAFANHFMVFGGFPVTMY) traverse the membrane as a helical segment. At 97–110 (SSMHGYFVFGQTGC) the chain is on the extracellular side. A disulfide bond links C110 and C187. A helical transmembrane segment spans residues 111–133 (YIEGFFATMGGEIALWSLVVLAI). A 'Ionic lock' involved in activated form stabilization motif is present at residues 134 to 136 (ERY). At 134–152 (ERYVVVCKPMSNFRFGENH) the chain is on the cytoplasmic side. A helical transmembrane segment spans residues 153–173 (AIMGVMMTWIMALACAAPPLF). Topologically, residues 174–202 (GWSRYIPEGMQCSCGVDYYTLKPEVNNES) are extracellular. The helical transmembrane segment at 203–224 (FVIYMFLVHFTIPLMIIFFCYG) threads the bilayer. Residues 225-252 (RLVCTVKEAAAQQQESATTQKAEKEVTR) are Cytoplasmic-facing. A helical transmembrane segment spans residues 253–274 (MVIIMVVAFLICWVPYASVAFY). At 275 to 286 (IFSNQGTDFGPI) the chain is on the extracellular side. The chain crosses the membrane as a helical span at residues 287–308 (FMTVPAFFAKSSAIYNPVIYIV). An N6-(retinylidene)lysine modification is found at K296. Over 309-354 (LNKQFRNCMITTICCGKNPFGDDETTSAATSKTEASSVSSSQVSPA) the chain is Cytoplasmic. 2 S-palmitoyl cysteine lipidation sites follow: C322 and C323. The tract at residues 332–354 (ETTSAATSKTEASSVSSSQVSPA) is disordered. The segment covering 334–354 (TSAATSKTEASSVSSSQVSPA) has biased composition (low complexity).

This sequence belongs to the G-protein coupled receptor 1 family. Opsin subfamily. Post-translationally, contains one covalently linked retinal chromophore. Upon light absorption, the covalently bound 11-cis-retinal is converted to all-trans-retinal. After hydrolysis of the Schiff base and release of the covalently bound all-trans-retinal, active rhodopsin is regenerated by binding of a fresh molecule of 11-cis-retinal.

It is found in the membrane. The protein localises to the cell projection. The protein resides in the cilium. Its subcellular location is the photoreceptor outer segment. Functionally, photoreceptor required for image-forming vision at low light intensity. Required for photoreceptor cell viability after birth. Light-induced isomerization of 11-cis to all-trans retinal triggers a conformational change that activates signaling via G-proteins. Subsequent receptor phosphorylation mediates displacement of the bound G-protein alpha subunit by arrestin and terminates signaling. This is Rhodopsin (RHO) from Ambystoma tigrinum (Eastern tiger salamander).